Here is a 336-residue protein sequence, read N- to C-terminus: UPF0284 protein Pcal_1534 (336 aa).

The protein belongs to the UPF0284 family.

The sequence is that of UPF0284 protein Pcal_1534 from Pyrobaculum calidifontis (strain DSM 21063 / JCM 11548 / VA1).